The sequence spans 362 residues: UDP-N-acetylglucosamine--N-acetylmuramyl-(pentapeptide) pyrophosphoryl-undecaprenol N-acetylglucosamine transferase (362 aa).

Residues 14-16 (TGG), Arg170, Ser199, and Gln289 contribute to the UDP-N-acetyl-alpha-D-glucosamine site.

It belongs to the glycosyltransferase 28 family. MurG subfamily.

It localises to the cell inner membrane. The enzyme catalyses di-trans,octa-cis-undecaprenyl diphospho-N-acetyl-alpha-D-muramoyl-L-alanyl-D-glutamyl-meso-2,6-diaminopimeloyl-D-alanyl-D-alanine + UDP-N-acetyl-alpha-D-glucosamine = di-trans,octa-cis-undecaprenyl diphospho-[N-acetyl-alpha-D-glucosaminyl-(1-&gt;4)]-N-acetyl-alpha-D-muramoyl-L-alanyl-D-glutamyl-meso-2,6-diaminopimeloyl-D-alanyl-D-alanine + UDP + H(+). It functions in the pathway cell wall biogenesis; peptidoglycan biosynthesis. Its function is as follows. Cell wall formation. Catalyzes the transfer of a GlcNAc subunit on undecaprenyl-pyrophosphoryl-MurNAc-pentapeptide (lipid intermediate I) to form undecaprenyl-pyrophosphoryl-MurNAc-(pentapeptide)GlcNAc (lipid intermediate II). The polypeptide is UDP-N-acetylglucosamine--N-acetylmuramyl-(pentapeptide) pyrophosphoryl-undecaprenol N-acetylglucosamine transferase (Borrelia hermsii (strain HS1 / DAH)).